Reading from the N-terminus, the 451-residue chain is Vacuolar cation/proton exchanger 1a (451 aa).

Residues 1 to 58 (MEAAAAMEAGRKLAARHPHGRSRTAHNMSSSSLRKKSDAALVRKVPVAPLRPLLANLQ) are Cytoplasmic-facing. The disordered stretch occupies residues 9–37 (AGRKLAARHPHGRSRTAHNMSSSSLRKKS). Residues 13 to 24 (LAARHPHGRSRT) show a composition bias toward basic residues. The helical transmembrane segment at 59-79 (EVFLATKLAVLFPAVPLAIAA) threads the bilayer. At 80–86 (QCFRFDQ) the chain is on the vacuolar side. The chain crosses the membrane as a helical span at residues 87–107 (VWVFALSLLGLIPLAERVSFL). Residues 108-120 (TEQIALYTGPTVG) lie on the Cytoplasmic side of the membrane. A helical transmembrane segment spans residues 121–141 (GLLNATCGNATELIIALFALL). A cation selection region spans residues 128-163 (GNATELIIALFALLKGKIEVVKCSLLGSVLSNLLLV). Over 142-153 (KGKIEVVKCSLL) the chain is Vacuolar. Residues 154–174 (GSVLSNLLLVLGTSLFCGGVV) form a helical membrane-spanning segment. Residues 175–191 (NLGARQPYDRNQSDVST) lie on the Cytoplasmic side of the membrane. The helical transmembrane segment at 192–212 (ALLFLAVLCHSAPLLLRYAVA) threads the bilayer. At 213 to 228 (AGEHSVSATSAAASLD) the chain is on the vacuolar side. The helical transmembrane segment at 229 to 249 (LSRACSFVMLASYVAYLFFQL) threads the bilayer. The Cytoplasmic segment spans residues 250–273 (KTHRQLFEPQEVDGGDAGDDDEEP). A helical transmembrane segment spans residues 274–294 (ALGFASALFWLALMTAVISVL). Residues 295–317 (SEYVVGTIEPTSQSWGLSVSFIS) lie on the Vacuolar side of the membrane. The chain crosses the membrane as a helical span at residues 318–338 (IILLPIVGNAAEHAGAIIFAL). The interval 325-360 (GNAAEHAGAIIFALKNKLDITLGVALGSATQISMFV) is cation selection. Residues 339–352 (KNKLDITLGVALGS) lie on the Cytoplasmic side of the membrane. Residues 353 to 373 (ATQISMFVVPLSVLVAWIMGV) form a helical membrane-spanning segment. The Vacuolar segment spans residues 374–378 (QMDLD). A helical membrane pass occupies residues 379 to 399 (FKLLETGSLFMAVLVTAFTLQ). The Cytoplasmic segment spans residues 400 to 404 (DGTSH). The helical transmembrane segment at 405 to 425 (YLKGILLLLCYIVIGACFFVA) threads the bilayer. Topologically, residues 426-451 (RQPAGHANSNGALLDVPTGSMSVQAA) are vacuolar.

This sequence belongs to the Ca(2+):cation antiporter (CaCA) (TC 2.A.19) family. Cation/proton exchanger (CAX) subfamily. In terms of tissue distribution, ubiquitous.

The protein localises to the vacuole membrane. Its function is as follows. Vacuolar cation/proton exchanger (CAX). Translocates Ca(2+) and other metal ions into vacuoles using the proton gradient formed by H(+)-ATPase and H(+)-pyrophosphatase. In Oryza sativa subsp. japonica (Rice), this protein is Vacuolar cation/proton exchanger 1a (CAX1a).